The chain runs to 473 residues: Keratin, type I cuticular Ha6 (473 aa).

The tract at residues 1–93 is head; that stretch reads MATQICTPTF…FCEGAFNGNE (93 aa). The IF rod domain maps to 93–404; the sequence is EKATMQILND…RLLDGEDCKL (312 aa). The interval 94–128 is coil 1A; it reads KATMQILNDRLANYLEKVRQLEQENTQLECRIREW. The tract at residues 129-139 is linker 1; sequence YECQIPYICPD. Positions 140 to 240 are coil 1B; it reads YQSYFKTAEE…HEEEVNALRS (101 aa). Residues 241–256 are linker 12; the sequence is QLGDRLNVEVDAAPPV. The interval 257-400 is coil 2; the sequence is DLNKILDDMR…ATYRRLLDGE (144 aa). Residues 401–473 are tail; that stretch reads DCKLPAHPCS…SREHVVPRAM (73 aa).

Belongs to the intermediate filament family. Heterotetramer of two type I and two type II keratins. In skin, only expressed in the suprabasal cells of tail scale epidermis. Suprabasally expressed in stratified squamous epithelia and also in the posterior unit of the complex filiform papillae of tongue. Expressed in rare anatomical sites in which an orthokeratinized stratum corneum would be too soft and a hard keratinized structure would be too rigid to meet the functional requirement of the respective epithelia.

The polypeptide is Keratin, type I cuticular Ha6 (Mus musculus (Mouse)).